The chain runs to 168 residues: Nascent polypeptide-associated complex subunit alpha (168 aa).

Residues 14–78 (SKNEKKAREL…PKVDDFTRRL (65 aa)) form the NAC-A/B domain. Residues 83 to 129 (QQAASAAKDPQSIQADMAAAAAAPAAPAAPAAAPEEDEAGQVDESGL) are disordered. Residues 100-115 (AAAAAAPAAPAAPAAA) are compositionally biased toward low complexity. In terms of domain architecture, UBA spans 129–168 (LDGQDIELVMQQANVSRNKAVKALREHNSDIVNAIMSLSK).

It belongs to the NAC-alpha family. As to quaternary structure, part of the nascent polypeptide-associated complex (NAC), consisting of EGD2 and EGD1. NAC associates with ribosomes via EGD1.

It is found in the cytoplasm. Its subcellular location is the nucleus. Component of the nascent polypeptide-associated complex (NAC), a dynamic component of the ribosomal exit tunnel, protecting the emerging polypeptides from interaction with other cytoplasmic proteins to ensure appropriate nascent protein targeting. The NAC complex also promotes mitochondrial protein import by enhancing productive ribosome interactions with the outer mitochondrial membrane and blocks the inappropriate interaction of ribosomes translating non-secretory nascent polypeptides with translocation sites in the membrane of the endoplasmic reticulum. EGD2 may also be involved in transcription regulation. The chain is Nascent polypeptide-associated complex subunit alpha (EGD2) from Eremothecium gossypii (strain ATCC 10895 / CBS 109.51 / FGSC 9923 / NRRL Y-1056) (Yeast).